The following is a 131-amino-acid chain: Insertion element iso-IS1n protein InsB (131 aa).

Belongs to the transposase 27 family.

Its function is as follows. Absolutely required for transposition of IS1. This Shigella dysenteriae protein is Insertion element iso-IS1n protein InsB (insB).